A 464-amino-acid chain; its full sequence is Secretion-regulating guanine nucleotide exchange factor (464 aa).

RCC1 repeat units follow at residues 14–66 (AAAL…VVTD), 68–118 (GSLF…ILTE), 119–170 (NGQV…AATA), 172–229 (GTVF…SLTD), 230–282 (AGEL…AQTV), 283–349 (TGKV…LAVI), and 350–401 (GGVC…ALCQ). Residues 301 to 313 (VETREGWESEKQD) are compositionally biased toward basic and acidic residues. The disordered stretch occupies residues 301–323 (VETREGWESEKQDPSLPGSGPQK). Residues 411–464 (HPSVTSPSPDATKEARSQEAMEQERNQKERHAETSPQAQSDRFRNGGLVAETLE) are disordered. Residues 421–443 (ATKEARSQEAMEQERNQKERHAE) show a composition bias toward basic and acidic residues. Ser-427 bears the Phosphoserine mark.

In terms of assembly, interacts with SEC5. The interaction occurs only in the presence of magnesium or manganese and is stimulated by dCTP or GTP.

It is found in the cytoplasm. The protein resides in the nucleus. In terms of biological role, probable guanine nucleotide exchange factor (GEF), which may be involved in the secretion process. The sequence is that of Secretion-regulating guanine nucleotide exchange factor (SERGEF) from Bos taurus (Bovine).